Reading from the N-terminus, the 658-residue chain is UvrABC system protein B (658 aa).

The Helicase ATP-binding domain maps to 25–182 (DSIRSGNKFN…LKLVDMGYKR (158 aa)). Residue 38–45 (GVTGSGKT) coordinates ATP. The short motif at 91–114 (YYDYYQPEAYIPRQDLFIEKDSSI) is the Beta-hairpin element. The 164-residue stretch at 433–596 (QVEVLFDRAK…TPRSASRNLE (164 aa)) folds into the Helicase C-terminal domain. Residues 623 to 658 (AKIVKELRKQMLEAAKNLEFEKAAALRDEIAKLREL) enclose the UVR domain.

This sequence belongs to the UvrB family. As to quaternary structure, forms a heterotetramer with UvrA during the search for lesions. Interacts with UvrC in an incision complex.

Its subcellular location is the cytoplasm. The UvrABC repair system catalyzes the recognition and processing of DNA lesions. A damage recognition complex composed of 2 UvrA and 2 UvrB subunits scans DNA for abnormalities. Upon binding of the UvrA(2)B(2) complex to a putative damaged site, the DNA wraps around one UvrB monomer. DNA wrap is dependent on ATP binding by UvrB and probably causes local melting of the DNA helix, facilitating insertion of UvrB beta-hairpin between the DNA strands. Then UvrB probes one DNA strand for the presence of a lesion. If a lesion is found the UvrA subunits dissociate and the UvrB-DNA preincision complex is formed. This complex is subsequently bound by UvrC and the second UvrB is released. If no lesion is found, the DNA wraps around the other UvrB subunit that will check the other stand for damage. The chain is UvrABC system protein B from Campylobacter fetus subsp. fetus (strain 82-40).